A 333-amino-acid polypeptide reads, in one-letter code: Phosphate acyltransferase (333 aa).

It belongs to the PlsX family. Homodimer. Probably interacts with PlsY.

The protein resides in the cytoplasm. The enzyme catalyses a fatty acyl-[ACP] + phosphate = an acyl phosphate + holo-[ACP]. It participates in lipid metabolism; phospholipid metabolism. In terms of biological role, catalyzes the reversible formation of acyl-phosphate (acyl-PO(4)) from acyl-[acyl-carrier-protein] (acyl-ACP). This enzyme utilizes acyl-ACP as fatty acyl donor, but not acyl-CoA. The polypeptide is Phosphate acyltransferase (Desulforamulus reducens (strain ATCC BAA-1160 / DSM 100696 / MI-1) (Desulfotomaculum reducens)).